Reading from the N-terminus, the 572-residue chain is Urease subunit alpha (572 aa).

The region spanning 133 to 572 (GGIDLHVHYI…TSLSQRYFLF (440 aa)) is the Urease domain. Residues His138, His140, and Lys221 each contribute to the Ni(2+) site. Lys221 bears the N6-carboxylysine mark. His223 is a binding site for substrate. His250 and His276 together coordinate Ni(2+). His324 serves as the catalytic Proton donor. Asp364 lines the Ni(2+) pocket.

This sequence belongs to the metallo-dependent hydrolases superfamily. Urease alpha subunit family. Heterotrimer of UreA (gamma), UreB (beta) and UreC (alpha) subunits. Three heterotrimers associate to form the active enzyme. Requires Ni cation as cofactor. In terms of processing, carboxylation allows a single lysine to coordinate two nickel ions.

The protein resides in the cytoplasm. It carries out the reaction urea + 2 H2O + H(+) = hydrogencarbonate + 2 NH4(+). It participates in nitrogen metabolism; urea degradation; CO(2) and NH(3) from urea (urease route): step 1/1. The protein is Urease subunit alpha of Streptococcus thermophilus (strain CNRZ 1066).